Consider the following 137-residue polypeptide: Large ribosomal subunit protein uL16 (137 aa).

It belongs to the universal ribosomal protein uL16 family. Part of the 50S ribosomal subunit.

Functionally, binds 23S rRNA and is also seen to make contacts with the A and possibly P site tRNAs. The polypeptide is Large ribosomal subunit protein uL16 (Sinorhizobium medicae (strain WSM419) (Ensifer medicae)).